A 164-amino-acid chain; its full sequence is Phosphopantetheine adenylyltransferase (164 aa).

Position 9 (Ser9) interacts with substrate. Residues 9–10 (SF) and His17 contribute to the ATP site. Substrate contacts are provided by Lys41, Ala78, and Arg92. Residues 93-95 (GLR), Glu103, and 128-134 (SRPITAT) contribute to the ATP site.

This sequence belongs to the bacterial CoaD family. As to quaternary structure, homohexamer. Mg(2+) serves as cofactor.

It is found in the cytoplasm. The enzyme catalyses (R)-4'-phosphopantetheine + ATP + H(+) = 3'-dephospho-CoA + diphosphate. Its pathway is cofactor biosynthesis; coenzyme A biosynthesis; CoA from (R)-pantothenate: step 4/5. In terms of biological role, reversibly transfers an adenylyl group from ATP to 4'-phosphopantetheine, yielding dephospho-CoA (dPCoA) and pyrophosphate. The polypeptide is Phosphopantetheine adenylyltransferase (Allorhizobium ampelinum (strain ATCC BAA-846 / DSM 112012 / S4) (Agrobacterium vitis (strain S4))).